A 276-amino-acid polypeptide reads, in one-letter code: Putative olfactory receptor 10J6 (276 aa).

The Extracellular portion of the chain corresponds to 1–25 (MRRKNLTEVTEFVFLGFSRFHKHHI). Asparagine 5 is a glycosylation site (N-linked (GlcNAc...) asparagine). A helical transmembrane segment spans residues 26-46 (TLFVVFLILYTLTVAGNAIIM). The Cytoplasmic segment spans residues 47 to 54 (TIICIDRH). The helical transmembrane segment at 55-75 (LHTPMYFFLSMLASSKTVYTL) threads the bilayer. The Extracellular portion of the chain corresponds to 76–99 (FIIPQMLSSFVTQTQPISLAGCTT). Cysteine 97 and cysteine 188 form a disulfide bridge. The chain crosses the membrane as a helical span at residues 100–120 (QTFFFVTLAINNCFLLTVMGY). Residues 121-139 (DHYMAICNPLRYRVITSKK) are Cytoplasmic-facing. The chain crosses the membrane as a helical span at residues 140–160 (VCVQLVCGAFSIGLAMAAVQV). The Extracellular portion of the chain corresponds to 161-196 (TSIFTLPFCHTVVGHFFCDILPVMKLSCINTTINEI). Asparagine 190 is a glycosylation site (N-linked (GlcNAc...) asparagine). A helical membrane pass occupies residues 197–216 (INFVVRLFVILVPMGLVFIS). Over 217–236 (YVLIISTVLKIASAEGWKKT) the chain is Cytoplasmic. The helical transmembrane segment at 237–257 (FATCAFHLTVVIVHYGCASIA) threads the bilayer. Topologically, residues 258 to 270 (YLMPKSENSIEQD) are extracellular. A helical membrane pass occupies residues 271 to 276 (LLLSVT).

This sequence belongs to the G-protein coupled receptor 1 family.

The protein resides in the cell membrane. Odorant receptor. This Homo sapiens (Human) protein is Putative olfactory receptor 10J6 (OR10J6P).